A 417-amino-acid polypeptide reads, in one-letter code: Lipoyl synthase, mitochondrial (417 aa).

The transit peptide at 1–30 (MATSIPRSRCFLTSSTLKVVPRSRTPLRSF) directs the protein to the mitochondrion. The segment at 23–62 (SRTPLRSFATTSDTPQTSVPEAPGKRSRPPTSFSDTLNAG) is disordered. 2 stretches are compositionally biased toward polar residues: residues 30 to 41 (FATTSDTPQTSV) and 51 to 61 (PPTSFSDTLNA). Positions 132, 137, 143, 163, 167, 170, and 378 each coordinate [4Fe-4S] cluster. Positions 146 to 367 (GSSKSAATAT…RQRALDMGFL (222 aa)) constitute a Radical SAM core domain.

Belongs to the radical SAM superfamily. Lipoyl synthase family. [4Fe-4S] cluster is required as a cofactor.

The protein resides in the mitochondrion. It catalyses the reaction [[Fe-S] cluster scaffold protein carrying a second [4Fe-4S](2+) cluster] + N(6)-octanoyl-L-lysyl-[protein] + 2 oxidized [2Fe-2S]-[ferredoxin] + 2 S-adenosyl-L-methionine + 4 H(+) = [[Fe-S] cluster scaffold protein] + N(6)-[(R)-dihydrolipoyl]-L-lysyl-[protein] + 4 Fe(3+) + 2 hydrogen sulfide + 2 5'-deoxyadenosine + 2 L-methionine + 2 reduced [2Fe-2S]-[ferredoxin]. It functions in the pathway protein modification; protein lipoylation via endogenous pathway; protein N(6)-(lipoyl)lysine from octanoyl-[acyl-carrier-protein]: step 2/2. Catalyzes the radical-mediated insertion of two sulfur atoms into the C-6 and C-8 positions of the octanoyl moiety bound to the lipoyl domains of lipoate-dependent enzymes, thereby converting the octanoylated domains into lipoylated derivatives. In Pyrenophora tritici-repentis (strain Pt-1C-BFP) (Wheat tan spot fungus), this protein is Lipoyl synthase, mitochondrial.